Reading from the N-terminus, the 361-residue chain is Peptide chain release factor 1 (361 aa).

Residue glutamine 235 is modified to N5-methylglutamine. Residues 284 to 306 are disordered; it reads SQQATAEAMTRKLQVGSGDRSQR.

Belongs to the prokaryotic/mitochondrial release factor family. Post-translationally, methylated by PrmC. Methylation increases the termination efficiency of RF1.

It localises to the cytoplasm. Its function is as follows. Peptide chain release factor 1 directs the termination of translation in response to the peptide chain termination codons UAG and UAA. This Xylella fastidiosa (strain 9a5c) protein is Peptide chain release factor 1.